An 804-amino-acid polypeptide reads, in one-letter code: Cyclic di-GMP-binding protein (804 aa).

The signal sequence occupies residues 1–18 (MKMVSLIALLVFATGAQA). The Periplasmic portion of the chain corresponds to 19-766 (APIASKAPAH…DWYMHNHPFR (748 aa)). A disordered region spans residues 24 to 69 (KAPAHQPTGSDLPPLPAAAPVAPAAQPSAQAVDPASAAPASDAGSA). Residues 767–787 (VIVVGLVGCLLVVAVLVRALF) traverse the membrane as a helical segment. Residues 788–804 (RHAMFRRRQLQEERQKS) are Cytoplasmic-facing.

This sequence belongs to the AcsB/BcsB family. Tightly associated with the cellulose synthase catalytic subunit.

Its subcellular location is the cell inner membrane. It functions in the pathway glycan metabolism; bacterial cellulose biosynthesis. In terms of biological role, binds the cellulose synthase activator, bis-(3'-5') cyclic diguanylic acid (c-di-GMP). This chain is Cyclic di-GMP-binding protein (bcsBI), found in Komagataeibacter xylinus (Gluconacetobacter xylinus).